Consider the following 85-residue polypeptide: Phosphocarrier protein HPr (85 aa).

Residues 1-85 (MFQKEIKINA…HLSKIMTELE (85 aa)) enclose the HPr domain. Residue His15 is the Pros-phosphohistidine intermediate of the active site.

The protein belongs to the HPr family.

It is found in the cytoplasm. General (non sugar-specific) component of the phosphoenolpyruvate-dependent sugar phosphotransferase system (sugar PTS). This major carbohydrate active-transport system catalyzes the phosphorylation of incoming sugar substrates concomitantly with their translocation across the cell membrane. The phosphoryl group from phosphoenolpyruvate (PEP) is transferred to the phosphoryl carrier protein HPr by enzyme I. Phospho-HPr then transfers it to the PTS EIIA domain. This chain is Phosphocarrier protein HPr (ptsH), found in Buchnera aphidicola subsp. Schizaphis graminum (strain Sg).